A 533-amino-acid polypeptide reads, in one-letter code: WD repeat-containing protein PAC11 (533 aa).

Residues 1-19 (MERLKQLEEKRRQLKELRE) show a composition bias toward basic and acidic residues. Positions 1 to 36 (MERLKQLEEKRRQLKELRERRKQASLFPGSETMGHH) are disordered. 2 WD repeats span residues 380-422 (FDEV…YLSL) and 432-475 (NHST…AIIG).

Interacts with NUM1, when DYN1 is present.

The protein localises to the cytoplasm. The protein resides in the cytoskeleton. Functionally, required for viability in the absence of the kinesin-related CIN8 mitotic motor. May be a dynein intermediate chain. In Saccharomyces cerevisiae (strain ATCC 204508 / S288c) (Baker's yeast), this protein is WD repeat-containing protein PAC11 (PAC11).